The sequence spans 657 residues: Splicing factor Cactin (657 aa).

The segment covering 1-15 (MGKDSKKHKKERRRE) has biased composition (basic residues). 3 disordered regions span residues 1–83 (MGKD…EDTL), 369–406 (QESE…ISKK), and 472–503 (ADVD…QGAS). Coiled-coil stretches lie at residues 23–77 (SDEE…RKDA) and 352–403 (RLQL…DEKI). The segment covering 26 to 60 (ERLQKRLAEQRSLKKDEKRRQKEEMKKNESAEEKR) has biased composition (basic and acidic residues). Positions 61–72 (ARRMEKKMRKDA) are enriched in basic residues. Over residues 389 to 401 (EEEEEEEEDEDDE) the composition is skewed to acidic residues. Residues 489–503 (PSSSAASSGAPQGAS) show a composition bias toward low complexity.

Belongs to the CACTIN family. Expressed in pharynx, intestine, vulva and spermatheca (at protein level).

The protein resides in the nucleus. It is found in the cytoplasm. Functionally, plays a role in pre-mRNA splicing by facilitating excision of a subset of introns. Plays a role during early embryonic development. Required for the distal tip cell migration at the end of larval development and for gonad morphogenesis. The polypeptide is Splicing factor Cactin (cacn-1) (Caenorhabditis elegans).